Consider the following 321-residue polypeptide: Carnitine monooxygenase reductase subunit (321 aa).

Residues 4–109 (YQMFEVQVSQ…STPNNLFALI (106 aa)) form the FAD-binding FR-type domain. The 2Fe-2S ferredoxin-type domain occupies 233–321 (DAFTLVLARS…AKGKRLVLDL (89 aa)). [2Fe-2S] cluster contacts are provided by C270, C275, C278, and C308.

The protein belongs to the PDR/VanB family. CntB subfamily. As to quaternary structure, composed of an oxygenase subunit (yeaW) and a reductase subunit (yeaX). Requires FMN as cofactor. [2Fe-2S] cluster serves as cofactor.

It catalyses the reaction (R)-carnitine + NADH + O2 + H(+) = (3R)-3-hydroxy-4-oxobutanoate + trimethylamine + NAD(+) + H2O. It carries out the reaction (R)-carnitine + NADPH + O2 + H(+) = (3R)-3-hydroxy-4-oxobutanoate + trimethylamine + NADP(+) + H2O. It participates in amine and polyamine metabolism; carnitine metabolism. In terms of biological role, converts carnitine to trimethylamine and malic semialdehyde. Can also use gamma-butyrobetaine, choline and betaine as substrates. The chain is Carnitine monooxygenase reductase subunit (yeaX) from Escherichia coli (strain K12).